Here is a 255-residue protein sequence, read N- to C-terminus: Probable transcriptional regulatory protein CMM_1817 (255 aa).

It belongs to the TACO1 family.

It is found in the cytoplasm. The sequence is that of Probable transcriptional regulatory protein CMM_1817 from Clavibacter michiganensis subsp. michiganensis (strain NCPPB 382).